The primary structure comprises 259 residues: MSSTSSKRAPTTATQRLKQDYLRIKKDPVPYICAEPLPSNILEWHYVVRGPEMTPYEGGYYHGKLIFPREFPFKPPSIYMITPNGRFKCNTRLCLSITDFHPDTWNPAWSVSTILTGLLSFMVEKGPTLGSIETSDFTKRQLAVQSLAFNLKDKVFCELFPEVVEEIKQKQKAQDELSSRPQTLPLPDVVPDGETHLVQNGIQLLNGHAPGAVPNLAGLQQANRHHGLLGGALANLFVIVGFAAFAYTVKYVLRSIAQE.

At 1–226 (MSSTSSKRAP…AGLQQANRHH (226 aa)) the chain is on the cytoplasmic side. Residues 12–162 (TATQRLKQDY…DKVFCELFPE (151 aa)) form the UBC core domain. The Glycyl thioester intermediate role is filled by Cys-94. The helical; Anchor for type IV membrane protein transmembrane segment at 227–247 (GLLGGALANLFVIVGFAAFAY) threads the bilayer. Topologically, residues 248 to 259 (TVKYVLRSIAQE) are lumenal.

The protein belongs to the ubiquitin-conjugating enzyme family. In terms of processing, auto-ubiquitinated.

Its subcellular location is the endoplasmic reticulum membrane. The catalysed reaction is S-ubiquitinyl-[E1 ubiquitin-activating enzyme]-L-cysteine + [E2 ubiquitin-conjugating enzyme]-L-cysteine = [E1 ubiquitin-activating enzyme]-L-cysteine + S-ubiquitinyl-[E2 ubiquitin-conjugating enzyme]-L-cysteine.. Its pathway is protein modification; protein ubiquitination. Functionally, catalyzes the covalent attachment of ubiquitin to other proteins. Seems to function in the selective degradation of misfolded membrane proteins from the endoplasmic reticulum (ERAD). In cooperation with the GATOR2 complex, catalyzes 'Lys-6'-linked ubiquitination of NPRL2. In Homo sapiens (Human), this protein is Ubiquitin-conjugating enzyme E2 J2 (UBE2J2).